The sequence spans 688 residues: Polyribonucleotide nucleotidyltransferase (688 aa).

Mg(2+) is bound by residues Asp-484 and Asp-490. The 60-residue stretch at 550–609 folds into the KH domain; that stretch reads PQTEIFNVAPDKIIEIIGQGGRVIKEIVEKFEVKIDLNTPSGEVKIMGNKERVLKTKEFI. The S1 motif domain occupies 626-688; sequence DEVLEAQVKR…NKGKIALDLA (63 aa).

This sequence belongs to the polyribonucleotide nucleotidyltransferase family. Requires Mg(2+) as cofactor.

The protein resides in the cytoplasm. The enzyme catalyses RNA(n+1) + phosphate = RNA(n) + a ribonucleoside 5'-diphosphate. In terms of biological role, involved in mRNA degradation. Catalyzes the phosphorolysis of single-stranded polyribonucleotides processively in the 3'- to 5'-direction. The polypeptide is Polyribonucleotide nucleotidyltransferase (Helicobacter pylori (strain J99 / ATCC 700824) (Campylobacter pylori J99)).